Here is a 111-residue protein sequence, read N- to C-terminus: Beta-microseminoprotein (111 aa).

A signal peptide spans 1 to 20; it reads MKFLLGTLVVLATFVTLCNS. Gln21 carries the post-translational modification Pyrrolidone carboxylic acid. 5 disulfides stabilise this stretch: Cys22–Cys67, Cys35–Cys59, Cys54–Cys90, Cys57–Cys66, and Cys81–Cys104.

This sequence belongs to the beta-microseminoprotein family. In terms of assembly, homodimer; Interacts with PI16. Corpora lutea, mostly in the luteal cells surrounding blood vessels.

It is found in the secreted. In Sus scrofa (Pig), this protein is Beta-microseminoprotein (MSMB).